Reading from the N-terminus, the 147-residue chain is Large ribosomal subunit protein uL22 (147 aa).

Residues 110–147 (EEKKTVAKKAPAAKKTTTTKAPAKKTTSTKKATAKKES) are disordered. Residues 117–140 (KKAPAAKKTTTTKAPAKKTTSTKK) show a composition bias toward low complexity.

This sequence belongs to the universal ribosomal protein uL22 family. Part of the 50S ribosomal subunit.

Its function is as follows. This protein binds specifically to 23S rRNA; its binding is stimulated by other ribosomal proteins, e.g. L4, L17, and L20. It is important during the early stages of 50S assembly. It makes multiple contacts with different domains of the 23S rRNA in the assembled 50S subunit and ribosome. The globular domain of the protein is located near the polypeptide exit tunnel on the outside of the subunit, while an extended beta-hairpin is found that lines the wall of the exit tunnel in the center of the 70S ribosome. The protein is Large ribosomal subunit protein uL22 of Campylobacter jejuni subsp. jejuni serotype O:6 (strain 81116 / NCTC 11828).